A 161-amino-acid polypeptide reads, in one-letter code: Vitamin K epoxide reductase complex subunit 1 (161 aa).

At Met-1–Gly-9 the chain is on the cytoplasmic side. Residues Arg-10–Val-29 traverse the membrane as a helical segment. Residues Lys-30–Asn-80 lie on the Lumenal side of the membrane. Cys-43 and Cys-51 form a disulfide bridge. Residue Asn-80 coordinates (S)-warfarin. A helical membrane pass occupies residues Ser-81–Gly-95. The Cytoplasmic portion of the chain corresponds to Cys-96 to Arg-100. Residues Trp-101–Leu-128 traverse the membrane as a helical segment. Residues Tyr-129 to Phe-131 lie on the Lumenal side of the membrane. A disulfide bridge connects residues Cys-132 and Cys-135. A helical membrane pass occupies residues Cys-132–Val-153. Residues Cys-135 and Tyr-139 each coordinate phylloquinone. Tyr-139 contributes to the (S)-warfarin binding site. The Cytoplasmic segment spans residues Pro-154–Pro-161.

It belongs to the VKOR family. In terms of tissue distribution, highly expressed in liver. Detected at lower levels in lung, kidney and testis.

The protein resides in the endoplasmic reticulum membrane. The enzyme catalyses phylloquinone + [protein]-disulfide + H2O = 2,3-epoxyphylloquinone + [protein]-dithiol. The catalysed reaction is phylloquinol + [protein]-disulfide = phylloquinone + [protein]-dithiol. With respect to regulation, inhibited by warfarin (coumadin). Warfarin locks VKORC1 in both redox states into the closed conformation. Its function is as follows. Involved in vitamin K metabolism. Catalytic subunit of the vitamin K epoxide reductase (VKOR) complex which reduces inactive vitamin K 2,3-epoxide to active vitamin K. Vitamin K is required for the gamma-carboxylation of various proteins, including clotting factors, and is required for normal blood coagulation, but also for normal bone development. The chain is Vitamin K epoxide reductase complex subunit 1 (Vkorc1) from Rattus norvegicus (Rat).